The chain runs to 725 residues: Ribosomal RNA large subunit methyltransferase K/L (725 aa).

One can recognise a THUMP domain in the interval 46 to 157 (VGYRLCLWSR…KGQAVLSLDL (112 aa)).

The protein belongs to the methyltransferase superfamily. RlmKL family.

The protein resides in the cytoplasm. It catalyses the reaction guanosine(2445) in 23S rRNA + S-adenosyl-L-methionine = N(2)-methylguanosine(2445) in 23S rRNA + S-adenosyl-L-homocysteine + H(+). The catalysed reaction is guanosine(2069) in 23S rRNA + S-adenosyl-L-methionine = N(2)-methylguanosine(2069) in 23S rRNA + S-adenosyl-L-homocysteine + H(+). Specifically methylates the guanine in position 2445 (m2G2445) and the guanine in position 2069 (m7G2069) of 23S rRNA. The sequence is that of Ribosomal RNA large subunit methyltransferase K/L from Stutzerimonas stutzeri (strain A1501) (Pseudomonas stutzeri).